We begin with the raw amino-acid sequence, 483 residues long: Putative (R)-citramalate synthase CimA (483 aa).

In terms of domain architecture, Pyruvate carboxyltransferase spans methionine 1 to tyrosine 245.

Belongs to the alpha-IPM synthase/homocitrate synthase family. Homodimer.

It carries out the reaction pyruvate + acetyl-CoA + H2O = (3R)-citramalate + CoA + H(+). Its pathway is amino-acid biosynthesis; L-isoleucine biosynthesis; 2-oxobutanoate from pyruvate: step 1/3. In terms of biological role, catalyzes the condensation of pyruvate and acetyl-coenzyme A to form (R)-citramalate. The protein is Putative (R)-citramalate synthase CimA of Methanosarcina acetivorans (strain ATCC 35395 / DSM 2834 / JCM 12185 / C2A).